The primary structure comprises 1025 residues: Dihydropyrimidine dehydrogenase [NADP(+)] (1025 aa).

Residues 69–100 (ERGALREAVRCLKCADAPCQKSCPTSLDIKSF) form the 4Fe-4S ferredoxin-type 1 domain. Residues cysteine 79, cysteine 82, cysteine 87, and cysteine 91 each coordinate [4Fe-4S] cluster. FAD is bound at residue valine 129. Cysteine 130, cysteine 136, cysteine 140, and glutamine 156 together coordinate [4Fe-4S] cluster. Residues 194 to 198 (GAGPA), 218 to 226 (EKQEYVGGL), and arginine 235 each bind FAD. NADP(+) is bound by residues 340–343 (AGDT), 364–365 (RK), and arginine 371. Residue lysine 384 is modified to N6-acetyllysine. Residues 437-439 (PFG) and 481-487 (DVVGMAN) each bind NADP(+). Residue 480–489 (GDVVGMANTT) coordinates FAD. Residues serine 550 and 574 to 575 (KT) contribute to the FMN site. Residues asparagine 609 and 668–670 (NLS) each bind substrate. Cysteine 671 functions as the Proton acceptor in the catalytic mechanism. An FMN-binding site is contributed by lysine 709. Residue 736–737 (NT) coordinates substrate. Residues glycine 767, 793–795 (TGG), and 816–817 (CS) each bind FMN. Serine 905 bears the Phosphoserine mark. 4Fe-4S ferredoxin-type domains are found at residues 944–976 (VVAL…FDPE) and 978–1007 (HLPT…MVSR). [4Fe-4S] cluster contacts are provided by cysteine 953, cysteine 956, cysteine 959, cysteine 963, cysteine 986, cysteine 989, cysteine 992, and cysteine 996.

It belongs to the dihydropyrimidine dehydrogenase family. As to quaternary structure, homodimer. FAD serves as cofactor. Requires FMN as cofactor. [4Fe-4S] cluster is required as a cofactor.

Its subcellular location is the cytoplasm. It catalyses the reaction 5,6-dihydrouracil + NADP(+) = uracil + NADPH + H(+). It carries out the reaction 5,6-dihydrothymine + NADP(+) = thymine + NADPH + H(+). It functions in the pathway amino-acid biosynthesis; beta-alanine biosynthesis. Inactivated by 5-iodouracil. Involved in pyrimidine base degradation. Catalyzes the reduction of uracil and thymine. Also involved the degradation of the chemotherapeutic drug 5-fluorouracil. The polypeptide is Dihydropyrimidine dehydrogenase [NADP(+)] (Rattus norvegicus (Rat)).